Here is a 1445-residue protein sequence, read N- to C-terminus: Tensin-3 (1445 aa).

The Phosphatase tensin-type domain occupies 1-170; the sequence is MEEGHGLDLT…QFLSGLLSGS (170 aa). The 127-residue stretch at 175 to 301 folds into the C2 tensin-type domain; that stretch reads ASPLFLHFVI…GKVELVFSAT (127 aa). Thr-323 bears the Phosphothreonine mark. Phosphoserine is present on residues Ser-332 and Ser-361. The tract at residues 358 to 421 is disordered; the sequence is RKKSSSDPGI…GTRRGLSAQE (64 aa). Polar residues predominate over residues 386–400; sequence TLSVSSDSGHSTASA. 2 positions are modified to phosphoserine: Ser-440 and Ser-516. Residues 538-568 form a disordered region; the sequence is VPDLGLGMDGPYERERTFGSREPKQPQPLLR. A compositionally biased stretch (basic and acidic residues) spans 548-561; sequence PYERERTFGSREPK. Ser-571 carries the post-translational modification Phosphoserine. Disordered regions lie at residues 618-695 and 717-769; these read DNPG…TLDI and PTHM…QPLG. At Thr-632 the chain carries Phosphothreonine. A phosphoserine mark is found at Ser-649, Ser-660, Ser-687, and Ser-690. Residues 723–733 are compositionally biased toward polar residues; it reads LGSQANGSVSP. Ser-735 and Ser-776 each carry phosphoserine. Tyr-780 carries the post-translational modification Phosphotyrosine. Residues Ser-811, Ser-866, and Ser-901 each carry the phosphoserine modification. Disordered regions lie at residues 859–981 and 1076–1127; these read ALRH…TRKD and GHSS…PHSG. The span at 864–873 shows a compositional bias: pro residues; the sequence is PFSPPEPPLS. Residues 914-935 show a composition bias toward polar residues; sequence ASSTPSFQQAFASSCTISSNGP. The segment covering 1099–1109 has biased composition (basic and acidic residues); it reads PEKKRASEGDR. A compositionally biased stretch (low complexity) spans 1110–1127; the sequence is SLGSVSPSSSGFSSPHSG. 2 positions are modified to phosphoserine: Ser-1149 and Ser-1154. In terms of domain architecture, SH2 spans 1172–1282; that stretch reads WYKADISREQ…ALPCKLLIPE (111 aa). 2 positions are modified to phosphoserine: Ser-1293 and Ser-1441. Residues 1310–1444 form the PTB domain; it reads ACNVWYLNSV…SKVMIGSPKK (135 aa).

This sequence belongs to the PTEN phosphatase protein family. As to quaternary structure, interacts with EGFR; EGF promotes the interaction with EGFR. Interacts with PTK2/FAK1 and BCAR1. Tyrosine phosphorylation is critical for these interactions. Interacts with Rho GTPase-activating protein DLC1 and with the regulatory p85 subunit of the PI3K kinase complex; in resting cells, interacts (via C2 tensin-type domain) with DLC1 but, following growth factor stimulation, TNS3 is phosphorylated which leads to weakened interaction with DLC1 and enhanced interaction (via C2 tensin-type domain) with p85 while DLC1 interaction with PTEN increases. Interacts (when phosphorylated on the SH2 domain) with integrins ITGB1, ITGB3 and ITGB5 and with scaffolding protein PEAK1 (phosphorylated on 'Tyr-635'); mediates the association of PEAK1 with ITGB1, ITGB3 and ITGB5. Interacts (via N-terminus) with DOCK5 (via N-terminus); the interaction increases DOCK5 guanine nucleotide exchange activity towards Rac. Interacts with receptor tyrosine kinase MET. Phosphorylated on Ser/Thr and Tyr residues. Phosphorylated on Thr-323 in the C2-type tensin domain following EGF stimulation which changes its binding preference from DLC1 to the p85 regulatory subunit of the PI3K kinase complex. EGF induces tyrosine phosphorylation in a time- and dose-dependent manner. Phosphorylation of the SH2 domain enhances interaction with PEAK1. As to expression, expressed in umbilical vein endothelial cells, epithelial cells, and fibroblasts cells (at protein level). Highly expressed in thyroid, kidney and placenta. Low expression in heart, skeletal muscle, spleen, liver, and lung. Expressed at higher levels in tonsil-derived mesenchymal stem cells (MSCs) than in adipose tissue-derived MSCs or bone marrow-derived MSCs. Expressed in tumor endothelial cells. Expression seems to be down-regulated in thyroid tumor tissues and in anaplastic carcinomas.

It localises to the cell junction. It is found in the focal adhesion. The protein localises to the cell projection. Its subcellular location is the podosome. Its function is as follows. May act as a protein phosphatase and/or a lipid phosphatase. Involved in the dissociation of the integrin-tensin-actin complex. EGF activates TNS4 and down-regulates TNS3 which results in capping the tail of ITGB1. Increases DOCK5 guanine nucleotide exchange activity towards Rac and plays a role in osteoclast podosome organization. Enhances RHOA activation in the presence of DLC1. Required for growth factor-induced epithelial cell migration; growth factor stimulation induces TNS3 phosphorylation which changes its binding preference from DLC1 to the p85 regulatory subunit of the PI3K kinase complex, displacing PI3K inhibitor PTEN and resulting in translocation of the TNS3-p85 complex to the leading edge of migrating cells to promote RAC1 activation. Meanwhile, PTEN switches binding preference from p85 to DLC1 and the PTEN-DLC1 complex translocates to the posterior of migrating cells to activate RHOA. Acts as an adapter protein by bridging the association of scaffolding protein PEAK1 with integrins ITGB1, ITGB3 and ITGB5 which contributes to the promotion of cell migration. Controls tonsil-derived mesenchymal stem cell proliferation and differentiation by regulating the activity of integrin ITGB1. The sequence is that of Tensin-3 (TNS3) from Homo sapiens (Human).